The following is a 310-amino-acid chain: CRAL-TRIO domain-containing protein YKL091C (310 aa).

Residues 101–274 (ERIKLAKMYP…KYGGTSVLHN (174 aa)) form the CRAL-TRIO domain.

This is CRAL-TRIO domain-containing protein YKL091C from Saccharomyces cerevisiae (strain ATCC 204508 / S288c) (Baker's yeast).